Reading from the N-terminus, the 312-residue chain is Methionyl-tRNA formyltransferase (312 aa).

107 to 110 (SLLP) is a (6S)-5,6,7,8-tetrahydrofolate binding site.

The protein belongs to the Fmt family.

It carries out the reaction L-methionyl-tRNA(fMet) + (6R)-10-formyltetrahydrofolate = N-formyl-L-methionyl-tRNA(fMet) + (6S)-5,6,7,8-tetrahydrofolate + H(+). Its function is as follows. Attaches a formyl group to the free amino group of methionyl-tRNA(fMet). The formyl group appears to play a dual role in the initiator identity of N-formylmethionyl-tRNA by promoting its recognition by IF2 and preventing the misappropriation of this tRNA by the elongation apparatus. The polypeptide is Methionyl-tRNA formyltransferase (Endomicrobium trichonymphae).